A 203-amino-acid polypeptide reads, in one-letter code: Large ribosomal subunit protein bL25 (203 aa).

The protein belongs to the bacterial ribosomal protein bL25 family. CTC subfamily. In terms of assembly, part of the 50S ribosomal subunit; part of the 5S rRNA/L5/L18/L25 subcomplex. Contacts the 5S rRNA. Binds to the 5S rRNA independently of L5 and L18.

In terms of biological role, this is one of the proteins that binds to the 5S RNA in the ribosome where it forms part of the central protuberance. In Xanthobacter autotrophicus (strain ATCC BAA-1158 / Py2), this protein is Large ribosomal subunit protein bL25.